We begin with the raw amino-acid sequence, 345 residues long: Ferredoxin--NADP reductase (345 aa).

FAD contacts are provided by D38, Q46, Y51, V91, F129, D295, and T336.

The protein belongs to the ferredoxin--NADP reductase type 2 family. In terms of assembly, homodimer. It depends on FAD as a cofactor.

The enzyme catalyses 2 reduced [2Fe-2S]-[ferredoxin] + NADP(+) + H(+) = 2 oxidized [2Fe-2S]-[ferredoxin] + NADPH. This Rhodospirillum rubrum (strain ATCC 11170 / ATH 1.1.1 / DSM 467 / LMG 4362 / NCIMB 8255 / S1) protein is Ferredoxin--NADP reductase.